We begin with the raw amino-acid sequence, 495 residues long: COP9 signalosome complex subunit 2 (495 aa).

The segment at 1–26 (MGDEYMDDDEDYGFEYEDDSGSEPDV) is disordered. The PCI domain occupies 254 to 416 (AHTDFFEAFK…GMIEMPKNKK (163 aa)). The disordered stretch occupies residues 426-468 (PNAGDQGTTKSDSKPGTSSEPSTTTSVTSSILQGPPATSSCHQ). Over residues 430–441 (DQGTTKSDSKPG) the composition is skewed to polar residues. Residues 442–455 (TSSEPSTTTSVTSS) show a composition bias toward low complexity.

It belongs to the CSN2 family. Component of the CSN complex, probably composed of csn-1, csn-2, csn-3, csn-4, csn-5, csn-6 and csn-7. Within the complex it probably interacts directly with csn-1, csn-3 and csn-4.

The protein resides in the cytoplasm. It is found in the nucleus. Essential component of the COP9 signalosome complex (CSN), a complex involved in various cellular and developmental processes. The CSN complex is an essential regulator of the ubiquitin (Ubl) conjugation pathway by mediating the deneddylation of the cullin subunits of the SCF-type E3 ligase complexes, leading to decrease the Ubl ligase activity of SCF. The CSN complex plays an essential role in embryogenesis and oogenesis and is required to regulate microtubule stability in the early embryo. Mediates mei-3/katanin targeting for degradation at the meiosis to mitosis transition via deneddylation of cul-3. The chain is COP9 signalosome complex subunit 2 (csn-2) from Caenorhabditis elegans.